The chain runs to 458 residues: Nuclear transcription factor Y subunit gamma (458 aa).

Positions 305-315 (QQQFSQFTDGQ) are enriched in low complexity. Positions 305–379 (QQQFSQFTDG…QQSSTSPPPS (75 aa)) are disordered. Positions 339-351 (TGNSTPCTSSLPT) are enriched in polar residues.

The protein belongs to the NFYC/HAP5 subunit family. In terms of assembly, heterotrimeric transcription factor composed of three components, NF-YA, NF-YB and NF-YC. NF-YB and NF-YC must interact and dimerize for NF-YA association and DNA binding.

It is found in the nucleus. Component of the sequence-specific heterotrimeric transcription factor (NF-Y) which specifically recognizes a 5'-CCAAT-3' box motif found in the promoters of its target genes. NF-Y can function as both an activator and a repressor, depending on its interacting cofactors. In Homo sapiens (Human), this protein is Nuclear transcription factor Y subunit gamma (NFYC).